The following is a 284-amino-acid chain: Two-pore potassium channel 4 (284 aa).

Residues 1–21 (MEEENLLNENLLHPNESSPEE) form a disordered region. Over 1–31 (MEEENLLNENLLHPNESSPEETQVTTVSKSK) the chain is Cytoplasmic. A helical transmembrane segment spans residues 32-52 (WTILVLAMILLLVYLTFGVCT). An intramembrane region (pore-forming) is located at residues 70-89 (DAFYFSIVTFSTVGYGDIVP). The helical transmembrane segment at 93 to 113 (TTKILTIVLVSTGVVFLDYLL) threads the bilayer. Residues 114 to 156 (NRVVSHVLSLQENAILDRINKTRNRAIRDHIAEDGKIRLKWKL) lie on the Cytoplasmic side of the membrane. Residues 157 to 177 (CLAFCAVGLCVGSGALFLHVF) form a helical membrane-spanning segment. Residues 184–203 (DSVYLSVISVTTVGYGDKTF) constitute an intramembrane region (pore-forming). The helical transmembrane segment at 211–231 (FAVFWLLLSTIAMATLFLYLA) threads the bilayer. The Cytoplasmic segment spans residues 232–284 (EMRIDRTTVMKLPPSESEFIVFKLRESGRISEDDIKQIVREFENLEEVPSSGS).

This sequence belongs to the two pore domain potassium channel (TC 1.A.1.7) family. Homodimer. As to expression, predominantly expressed in pollen.

It is found in the cell membrane. Functionally, voltage-independent, instantaneously activating, potassium-selective plasma membrane ion channel. Open rectifier. Regulated by cytoplasmic pH and extra-cellular calcium. Has some permeability for Rb(+) and NH(4)(+), but none for Na(+) or Li(+). This Arabidopsis thaliana (Mouse-ear cress) protein is Two-pore potassium channel 4 (TPK4).